We begin with the raw amino-acid sequence, 419 residues long: Bilin biosynthesis protein CpeY (419 aa).

Functionally, involved in the biosynthesis of bilin. This is Bilin biosynthesis protein CpeY (cpeY) from Synechococcus sp. (strain WH8020).